A 370-amino-acid polypeptide reads, in one-letter code: Chaperone protein DnaJ (370 aa).

One can recognise a J domain in the interval aspartate 5–glycine 70. Residues glycine 134–glutamine 212 form a CR-type zinc finger. Zn(2+) is bound by residues cysteine 147, cysteine 150, cysteine 164, cysteine 167, cysteine 186, cysteine 189, cysteine 200, and cysteine 203. 4 CXXCXGXG motif repeats span residues cysteine 147 to glycine 154, cysteine 164 to glycine 171, cysteine 186 to glycine 193, and cysteine 200 to glycine 207. The segment at aspartate 351–aspartate 370 is disordered.

It belongs to the DnaJ family. As to quaternary structure, homodimer. It depends on Zn(2+) as a cofactor.

Its subcellular location is the cytoplasm. In terms of biological role, participates actively in the response to hyperosmotic and heat shock by preventing the aggregation of stress-denatured proteins and by disaggregating proteins, also in an autonomous, DnaK-independent fashion. Unfolded proteins bind initially to DnaJ; upon interaction with the DnaJ-bound protein, DnaK hydrolyzes its bound ATP, resulting in the formation of a stable complex. GrpE releases ADP from DnaK; ATP binding to DnaK triggers the release of the substrate protein, thus completing the reaction cycle. Several rounds of ATP-dependent interactions between DnaJ, DnaK and GrpE are required for fully efficient folding. Also involved, together with DnaK and GrpE, in the DNA replication of plasmids through activation of initiation proteins. The polypeptide is Chaperone protein DnaJ (Acinetobacter baumannii (strain AB0057)).